Here is a 221-residue protein sequence, read N- to C-terminus: Probable chemoreceptor glutamine deamidase CheD 1 (221 aa).

Belongs to the CheD family.

It carries out the reaction L-glutaminyl-[protein] + H2O = L-glutamyl-[protein] + NH4(+). Probably deamidates glutamine residues to glutamate on methyl-accepting chemotaxis receptors (MCPs), playing an important role in chemotaxis. The protein is Probable chemoreceptor glutamine deamidase CheD 1 of Methanosarcina mazei (strain ATCC BAA-159 / DSM 3647 / Goe1 / Go1 / JCM 11833 / OCM 88) (Methanosarcina frisia).